Reading from the N-terminus, the 313-residue chain is E3 ubiquitin-protein ligase SINA-like 2 (313 aa).

Residues 1-26 (MSGEASTSRRKRQRVPSSVESVENGG) form a disordered region. An RING-type zinc finger spans residues 44–80 (CPICCHALTSPIFQCDNGHIACSSCCTKLRNKCPSCA). The segment at 94–277 (VVEAVMVTCP…LKMEICIRKL (184 aa)) is SBD. An SIAH-type zinc finger spans residues 97 to 155 (AVMVTCPNVKHGCTEKFSYGKELIHEKDCRFALCYCPAPNCNYSGVYKDLYSHFYVNHY). The Zn(2+) site is built by Cys102, Cys109, His121, Cys125, Cys132, Cys137, His149, and His154. The interval 278–313 (KKDEEEADEDEESEEEEDDDDDDDDDDEEEDADEEE) is disordered. A compositionally biased stretch (acidic residues) spans 282-313 (EEADEDEESEEEEDDDDDDDDDDEEEDADEEE).

Belongs to the SINA (Seven in absentia) family.

It catalyses the reaction S-ubiquitinyl-[E2 ubiquitin-conjugating enzyme]-L-cysteine + [acceptor protein]-L-lysine = [E2 ubiquitin-conjugating enzyme]-L-cysteine + N(6)-ubiquitinyl-[acceptor protein]-L-lysine.. Its pathway is protein modification; protein ubiquitination. Functionally, E3 ubiquitin-protein ligase that mediates ubiquitination and subsequent proteasomal degradation of target proteins. E3 ubiquitin ligases accept ubiquitin from an E2 ubiquitin-conjugating enzyme in the form of a thioester and then directly transfers the ubiquitin to targeted substrates. It probably triggers the ubiquitin-mediated degradation of different substrates. In Arabidopsis thaliana (Mouse-ear cress), this protein is E3 ubiquitin-protein ligase SINA-like 2.